Reading from the N-terminus, the 571-residue chain is Mannan endo-1,4-beta-mannosidase B (571 aa).

The signal sequence occupies residues 1–19 (MNSLSLLLFCIFFVFSTFA). One can recognise a CBM6 domain in the interval 22 to 141 (VYYEAENGKL…WMWVDAFVIN (120 aa)). One can recognise a GH26 domain in the interval 165–459 (PAAKKLYDFL…FTHKTVMNMD (295 aa)). W286 lines the substrate pocket. Catalysis depends on E319, which acts as the Proton donor. Substrate contacts are provided by W324 and Y379. The active-site Nucleophile is E407. 2 CBM10 domains span residues 491 to 527 (ECFS…CGIG) and 534 to 571 (VCWS…CGII).

The protein belongs to the glycosyl hydrolase 26 family.

It catalyses the reaction Random hydrolysis of (1-&gt;4)-beta-D-mannosidic linkages in mannans, galactomannans and glucomannans.. In Piromyces sp, this protein is Mannan endo-1,4-beta-mannosidase B (MANB).